A 258-amino-acid polypeptide reads, in one-letter code: MLGDFIIRLLVLILGYTYPAFECFKTVEKNKVDIEELRFWCQYWILLALISSFERVGDFFISWLPLYGEMKVVFFVYLWYPKTKGTRHVYETLLKPYMAQHETEIDRKIMELRARAWDFFIFYFNNFAQAGQSTLIQGFQYVLAQSVRFSAAAANQPPTERNVNMNAQSPVEMDNDPPSPRAPRPLNKSLSALRSLEKQTSRGRKWPPPTPPPTPGRDSAGTFNGDDGVNIPDTIPGSPLTDARAKLRRSNSRTQPAA.

The tract at residues 153–258 (AANQPPTERN…RSNSRTQPAA (106 aa)) is disordered. Polar residues predominate over residues 156-169 (QPPTERNVNMNAQS). The segment covering 206–215 (WPPPTPPPTP) has biased composition (pro residues).

It belongs to the DP1 family.

This is HVA22-like protein j (HVA22J) from Arabidopsis thaliana (Mouse-ear cress).